The following is a 454-amino-acid chain: Na(+)/H(+) antiporter NhaA (454 aa).

10 helical membrane passes run 22-42, 64-84, 106-126, 150-170, 190-210, 228-248, 284-304, 306-326, 355-375, and 386-406; these read ISGL…NLPF, MGLG…TVGL, LCAV…ISLF, GWAV…ALFA, LLAI…YWFL, VPWL…FEAG, PFSA…VHFE, LTLA…LVVG, MFPA…IASL, and ARFG…ILLS.

Belongs to the NhaA Na(+)/H(+) (TC 2.A.33) antiporter family.

The protein resides in the cell membrane. It carries out the reaction Na(+)(in) + 2 H(+)(out) = Na(+)(out) + 2 H(+)(in). Its function is as follows. Na(+)/H(+) antiporter that extrudes sodium in exchange for external protons. This chain is Na(+)/H(+) antiporter NhaA, found in Bifidobacterium adolescentis (strain ATCC 15703 / DSM 20083 / NCTC 11814 / E194a).